Reading from the N-terminus, the 283-residue chain is Small ribosomal subunit protein uS2B (283 aa).

The segment at 254-283 is disordered; it reads GQVGQSAWDEEGDWNTTGAAQTSDWANTVA. Residues 267 to 283 are compositionally biased toward polar residues; it reads WNTTGAAQTSDWANTVA.

The protein belongs to the universal ribosomal protein uS2 family. Component of the small ribosomal subunit. Mature ribosomes consist of a small (40S) and a large (60S) subunit. The 40S subunit contains about 33 different proteins and 1 molecule of RNA (18S). The 60S subunit contains about 49 different proteins and 3 molecules of RNA (25S, 5.8S and 5S). Interacts with rps21.

Its subcellular location is the cytoplasm. In terms of biological role, required for the assembly and/or stability of the 40S ribosomal subunit. Required for the processing of the 20S rRNA-precursor to mature 18S rRNA in a late step of the maturation of 40S ribosomal subunits. The polypeptide is Small ribosomal subunit protein uS2B (rps0b) (Schizosaccharomyces japonicus (strain yFS275 / FY16936) (Fission yeast)).